Consider the following 525-residue polypeptide: NAD(P)H-quinone oxidoreductase subunit 2 (525 aa).

14 helical membrane passes run 14–34 (AIWP…VDLV), 42–62 (SLPA…VLQW), 78–98 (PVSI…VMMA), 117–137 (LTAT…MVFV), 167–187 (LLTG…LYGL), 201–221 (LANA…GIGF), 240–260 (PTPV…ALAI), 276–296 (AVLS…AIAQ), 302–322 (LLAY…VAGT), 330–350 (IFYL…VTLF), 374–394 (LCLS…GFFG), 396–416 (LYLF…VGLV), 462–482 (VGMV…NPLF), and 494–514 (FLGF…SLAV).

This sequence belongs to the complex I subunit 2 family. NDH-1 can be composed of about 15 different subunits; different subcomplexes with different compositions have been identified which probably have different functions.

Its subcellular location is the cellular thylakoid membrane. It carries out the reaction a plastoquinone + NADH + (n+1) H(+)(in) = a plastoquinol + NAD(+) + n H(+)(out). The enzyme catalyses a plastoquinone + NADPH + (n+1) H(+)(in) = a plastoquinol + NADP(+) + n H(+)(out). NDH-1 shuttles electrons from an unknown electron donor, via FMN and iron-sulfur (Fe-S) centers, to quinones in the respiratory and/or the photosynthetic chain. The immediate electron acceptor for the enzyme in this species is believed to be plastoquinone. Couples the redox reaction to proton translocation, and thus conserves the redox energy in a proton gradient. Cyanobacterial NDH-1 also plays a role in inorganic carbon-concentration. The polypeptide is NAD(P)H-quinone oxidoreductase subunit 2 (Synechococcus sp. (strain JA-3-3Ab) (Cyanobacteria bacterium Yellowstone A-Prime)).